We begin with the raw amino-acid sequence, 189 residues long: uncharacterized protein (189 aa).

This is an uncharacterized protein from Danio rerio (Zebrafish).